The chain runs to 478 residues: Pentraxin-4 (478 aa).

The signal sequence occupies residues 1–25; the sequence is MGCSWRKTLSFFLVFVPIYLHGASS. Residues Asn67 and Asn91 are each glycosylated (N-linked (GlcNAc...) asparagine). Residues 208-222 show a composition bias toward basic and acidic residues; that stretch reads RDRQELRAASEHRGP. Positions 208 to 262 are disordered; sequence RDRQELRAASEHRGPPQDSSAPLQGRREPPASGSHRVLSGTAPKDPRQQAWSPQV. The 205-residue stretch at 269 to 473 folds into the Pentraxin (PTX) domain; it reads VGPTLVFPNA…GFVQGANCTC (205 aa). Cys300 and Cys364 are disulfide-bonded. Residues Asp322, Asn323, Glu406, Gln407, and Asp408 each coordinate Ca(2+).

Requires Ca(2+) as cofactor. As to expression, widely expressed at low levels with highest levels in small intestine, testis and brain. Very low expression in endothelial cells, monocytes, neutrophils and lymphocytes. Isoform 1 is not expressed in small intestine.

The protein resides in the secreted. The polypeptide is Pentraxin-4 (PTX4) (Homo sapiens (Human)).